The following is an 866-amino-acid chain: Translation initiation factor IF-2 (866 aa).

Disordered stretches follow at residues 1–63 and 92–257; these read MTND…AAVQ and VVRA…RGRS. Over residues 26 to 36 the composition is skewed to polar residues; that stretch reads ETGQVRQSFSH. A compositionally biased stretch (basic and acidic residues) spans 92 to 135; sequence VVRAAEEAERKRLEEIERRRREEEEARLKVEEEARRKAEEEAAR. 2 stretches are compositionally biased toward low complexity: residues 152-164 and 179-197; these read VAPAAPQVAAAPQ and PDASARPAAEAPRSPTEAP. The 169-residue stretch at 365–533 folds into the tr-type G domain; it reads SRPPVVTVMG…AILLQSEILD (169 aa). Residues 374 to 381 are G1; sequence GHVDHGKT. Residue 374-381 participates in GTP binding; it reads GHVDHGKT. Residues 399–403 form a G2 region; that stretch reads GITQH. The segment at 421–424 is G3; the sequence is DTPG. GTP contacts are provided by residues 421–425 and 475–478; these read DTPGH and NKMD. Residues 475 to 478 are G4; that stretch reads NKMD. The tract at residues 511-513 is G5; sequence SAK.

It belongs to the TRAFAC class translation factor GTPase superfamily. Classic translation factor GTPase family. IF-2 subfamily.

Its subcellular location is the cytoplasm. In terms of biological role, one of the essential components for the initiation of protein synthesis. Protects formylmethionyl-tRNA from spontaneous hydrolysis and promotes its binding to the 30S ribosomal subunits. Also involved in the hydrolysis of GTP during the formation of the 70S ribosomal complex. This chain is Translation initiation factor IF-2, found in Rhodospirillum rubrum (strain ATCC 11170 / ATH 1.1.1 / DSM 467 / LMG 4362 / NCIMB 8255 / S1).